The chain runs to 834 residues: Protein SEY1 (834 aa).

A disordered region spans residues 1 to 26 (MSNVPSPTVTLEGDSPDAAHEAVSSS). Topologically, residues 1–733 (MSNVPSPTVT…KRSIMQHVTQ (733 aa)) are cytoplasmic. The GB1/RHD3-type G domain maps to 63–296 (PGDYRIISVF…SESFLFKPNY (234 aa)). 73–80 (GSQSTGKS) is a GTP binding site. A coiled-coil region spans residues 659 to 688 (VRDKKLKRQYETVREEKEAEEEDEDEWDSE). The segment at 670 to 689 (TVREEKEAEEEDEDEWDSED) is disordered. Acidic residues predominate over residues 676-689 (EAEEEDEDEWDSED). The helical transmembrane segment at 734–754 (IPYYIYIVILVLGWNEFMAIL) threads the bilayer. Over 755-757 (RNP) the chain is Lumenal. Residues 758-778 (FFFTLLIMLAGATYVMYSMNL) traverse the membrane as a helical segment. The Cytoplasmic segment spans residues 779-834 (LGPASIVVQRMANEALGLAKEKLREFVVDDHMQHGHNMKKMTTNDIELDDLSEEST).

The protein belongs to the TRAFAC class dynamin-like GTPase superfamily. GB1/RHD3 GTPase family. RHD3 subfamily.

It is found in the endoplasmic reticulum membrane. In terms of biological role, cooperates with the reticulon proteins and tubule-shaping DP1 family proteins to generate and maintain the structure of the tubular endoplasmic reticulum network. Has GTPase activity, which is required for its function in ER organization. The sequence is that of Protein SEY1 from Clavispora lusitaniae (strain ATCC 42720) (Yeast).